Reading from the N-terminus, the 226-residue chain is Enolase-phosphatase E1 (226 aa).

This sequence belongs to the HAD-like hydrolase superfamily. MasA/MtnC family. Monomer. The cofactor is Mg(2+).

The enzyme catalyses 5-methylsulfanyl-2,3-dioxopentyl phosphate + H2O = 1,2-dihydroxy-5-(methylsulfanyl)pent-1-en-3-one + phosphate. It functions in the pathway amino-acid biosynthesis; L-methionine biosynthesis via salvage pathway; L-methionine from S-methyl-5-thio-alpha-D-ribose 1-phosphate: step 3/6. The protein operates within amino-acid biosynthesis; L-methionine biosynthesis via salvage pathway; L-methionine from S-methyl-5-thio-alpha-D-ribose 1-phosphate: step 4/6. Bifunctional enzyme that catalyzes the enolization of 2,3-diketo-5-methylthiopentyl-1-phosphate (DK-MTP-1-P) into the intermediate 2-hydroxy-3-keto-5-methylthiopentenyl-1-phosphate (HK-MTPenyl-1-P), which is then dephosphorylated to form the acireductone 1,2-dihydroxy-3-keto-5-methylthiopentene (DHK-MTPene). The chain is Enolase-phosphatase E1 from Shewanella baltica (strain OS155 / ATCC BAA-1091).